Consider the following 888-residue polypeptide: Isoleucine--tRNA ligase (888 aa).

The short motif at 61–71 (PYANGSIHIGH) is the 'HIGH' region element. L-isoleucyl-5'-AMP is bound at residue Glu-551. Positions 592–596 (KMSKQ) match the 'KMSKS' region motif. ATP is bound at residue Lys-595. Residues Cys-862, Cys-865, Cys-879, and Cys-882 each coordinate Zn(2+).

This sequence belongs to the class-I aminoacyl-tRNA synthetase family. IleS type 1 subfamily. Monomer. Zn(2+) serves as cofactor.

It is found in the cytoplasm. It carries out the reaction tRNA(Ile) + L-isoleucine + ATP = L-isoleucyl-tRNA(Ile) + AMP + diphosphate. Functionally, catalyzes the attachment of isoleucine to tRNA(Ile). As IleRS can inadvertently accommodate and process structurally similar amino acids such as valine, to avoid such errors it has two additional distinct tRNA(Ile)-dependent editing activities. One activity is designated as 'pretransfer' editing and involves the hydrolysis of activated Val-AMP. The other activity is designated 'posttransfer' editing and involves deacylation of mischarged Val-tRNA(Ile). This Mycoplasmopsis pulmonis (strain UAB CTIP) (Mycoplasma pulmonis) protein is Isoleucine--tRNA ligase.